The following is a 220-amino-acid chain: Large ribosomal subunit protein bL25 (220 aa).

Positions 186–199 are enriched in acidic residues; sequence ELEDEDEDEDEVAA. A disordered region spans residues 186 to 220; that stretch reads ELEDEDEDEDEVAADEVPATEVDDQAAVKEGEGKE. Positions 211-220 are enriched in basic and acidic residues; sequence AAVKEGEGKE.

The protein belongs to the bacterial ribosomal protein bL25 family. CTC subfamily. Part of the 50S ribosomal subunit; part of the 5S rRNA/L5/L18/L25 subcomplex. Contacts the 5S rRNA. Binds to the 5S rRNA independently of L5 and L18.

This is one of the proteins that binds to the 5S RNA in the ribosome where it forms part of the central protuberance. The protein is Large ribosomal subunit protein bL25 of Christiangramia forsetii (strain DSM 17595 / CGMCC 1.15422 / KT0803) (Gramella forsetii).